The sequence spans 99 residues: Nucleoid-associated protein MGAS2096_Spy1605 (99 aa).

It belongs to the YbaB/EbfC family. As to quaternary structure, homodimer.

It localises to the cytoplasm. The protein resides in the nucleoid. Binds to DNA and alters its conformation. May be involved in regulation of gene expression, nucleoid organization and DNA protection. The chain is Nucleoid-associated protein MGAS2096_Spy1605 from Streptococcus pyogenes serotype M12 (strain MGAS2096).